A 196-amino-acid polypeptide reads, in one-letter code: Elongation factor Ts (196 aa).

Residues 80–83 are involved in Mg(2+) ion dislocation from EF-Tu; that stretch reads TDFV.

The protein belongs to the EF-Ts family.

Its subcellular location is the cytoplasm. Its function is as follows. Associates with the EF-Tu.GDP complex and induces the exchange of GDP to GTP. It remains bound to the aminoacyl-tRNA.EF-Tu.GTP complex up to the GTP hydrolysis stage on the ribosome. The polypeptide is Elongation factor Ts (Thermus thermophilus (strain ATCC BAA-163 / DSM 7039 / HB27)).